Reading from the N-terminus, the 201-residue chain is 3-isopropylmalate dehydratase small subunit (201 aa).

It belongs to the LeuD family. LeuD type 1 subfamily. Heterodimer of LeuC and LeuD.

It catalyses the reaction (2R,3S)-3-isopropylmalate = (2S)-2-isopropylmalate. Its pathway is amino-acid biosynthesis; L-leucine biosynthesis; L-leucine from 3-methyl-2-oxobutanoate: step 2/4. Catalyzes the isomerization between 2-isopropylmalate and 3-isopropylmalate, via the formation of 2-isopropylmaleate. The protein is 3-isopropylmalate dehydratase small subunit of Roseobacter denitrificans (strain ATCC 33942 / OCh 114) (Erythrobacter sp. (strain OCh 114)).